A 178-amino-acid polypeptide reads, in one-letter code: MTQMSPSDVPSMGRRQFMNLLTFGTATGVALGALYPVANFFMPLRAGGGTGGTTAKDELGNAVTATGWLSNHPAGDRSLVQGLKGDPTYLIVDGDAAIGNFGINAICTHLGCVVPWNSGANKYICPCHGSQYDANGKVVRGPAPLSLALTHIDIDDDNVLVSQWTETDFRTGDKPWWA.

A helical membrane pass occupies residues 20–42 (LLTFGTATGVALGALYPVANFFM). The region spanning 71-161 (NHPAGDRSLV…IDIDDDNVLV (91 aa)) is the Rieske domain. [2Fe-2S] cluster-binding residues include Cys-107, His-109, Cys-125, and His-128. A disulfide bridge connects residues Cys-112 and Cys-127.

Belongs to the Rieske iron-sulfur protein family. In terms of assembly, the 4 large subunits of the cytochrome b6-f complex are cytochrome b6, subunit IV (17 kDa polypeptide, PetD), cytochrome f and the Rieske protein, while the 4 small subunits are PetG, PetL, PetM and PetN. The complex functions as a dimer. [2Fe-2S] cluster serves as cofactor.

Its subcellular location is the cellular thylakoid membrane. The catalysed reaction is 2 oxidized [plastocyanin] + a plastoquinol + 2 H(+)(in) = 2 reduced [plastocyanin] + a plastoquinone + 4 H(+)(out). Its function is as follows. Component of the cytochrome b6-f complex, which mediates electron transfer between photosystem II (PSII) and photosystem I (PSI), cyclic electron flow around PSI, and state transitions. The polypeptide is Cytochrome b6-f complex iron-sulfur subunit (Prochlorococcus marinus (strain SARG / CCMP1375 / SS120)).